A 254-amino-acid polypeptide reads, in one-letter code: Phycobilisome rod-core linker polypeptide CpcG3 (254 aa).

Positions Ser-11–Lys-191 constitute a PBS-linker domain.

This sequence belongs to the phycobilisome linker protein family. In terms of assembly, the phycobilisome is a hemidiscoidal structure that is composed of two distinct substructures: a core complex and a number of rods radiating from the core.

It is found in the cellular thylakoid membrane. Rod-core linker protein required for attachment of phycocyanin to allophycocyanin in cores of phycobilisomes. In terms of biological role, linker polypeptides determine the state of aggregation and the location of the disk-shaped phycobiliprotein units within the phycobilisome and modulate their spectroscopic properties in order to mediate a directed and optimal energy transfer. This chain is Phycobilisome rod-core linker polypeptide CpcG3 (cpcG3), found in Mastigocladus laminosus (Fischerella sp.).